Reading from the N-terminus, the 401-residue chain is 4-hydroxy-3-methylbut-2-en-1-yl diphosphate synthase (ferredoxin) (401 aa).

4 residues coordinate [4Fe-4S] cluster: Cys-306, Cys-309, Cys-340, and Glu-347.

The protein belongs to the IspG family. It depends on [4Fe-4S] cluster as a cofactor.

It carries out the reaction (2E)-4-hydroxy-3-methylbut-2-enyl diphosphate + 2 oxidized [2Fe-2S]-[ferredoxin] + H2O = 2-C-methyl-D-erythritol 2,4-cyclic diphosphate + 2 reduced [2Fe-2S]-[ferredoxin] + H(+). Its pathway is isoprenoid biosynthesis; isopentenyl diphosphate biosynthesis via DXP pathway; isopentenyl diphosphate from 1-deoxy-D-xylulose 5-phosphate: step 5/6. Converts 2C-methyl-D-erythritol 2,4-cyclodiphosphate (ME-2,4cPP) into 1-hydroxy-2-methyl-2-(E)-butenyl 4-diphosphate. The sequence is that of 4-hydroxy-3-methylbut-2-en-1-yl diphosphate synthase (ferredoxin) from Synechococcus sp. (strain CC9902).